Reading from the N-terminus, the 451-residue chain is MAKKLEAQGGRGGEEWDDGGAYENVKKVYVGQGDSGVVYVKFDYEKDGKIVSHEHGKQTLLGTEEFVVDPEDYITSVKIYYEKLFGSPIEIVTALIFKTFKGKTSQPFGLTSGEEAELGGGKIVGFHGSSSDLIHSVGVYIIPSTTPLTPPVSGGLTKLEAQGGRGGDVWDDGGAYDNVKKVYVGQGDSGVVYVKFDYEKDGKIVSLEHGKQTLLGTEEFEIDPEDYITYVKVYYEKLFGSPIEIVTALIFKTFKGKTSQPFGLTSGEEAELGGGKIVGFHGTSSDLIHSLGAYIIPSSTPLTPSSNTIPAQGGDGGVAWDDGVHDSVKKIYVGQGDSCVTYFKADYEKASKPVLGSDHGKKTLLGAEEFVLGPDEYVTAVSGYYDKIFSVDAPAIVSLKFKTNKRTSIPYGLEGGTEFVLEKKDHKIVGFYGQAGEYLYKLGVNVAPIAK.

Ala-2 bears the N-acetylalanine mark. 3 Jacalin-type lectin domains span residues 2–143 (AKKL…YIIP), 156–297 (LTKL…YIIP), and 306–448 (SNTI…NVAP).

This sequence belongs to the jacalin lectin family. Component of the PYK10 complex, at least composed of PYK10/BGLU23, BGLU21, BGLU22, JAL22, JAL23, PBP1/JAL30, PBP2/JAL31, JAL32, JAL33, JAL34, JAL35, GLL22 and GLL23.

The chain is Jacalin-related lectin 35 (JAL35) from Arabidopsis thaliana (Mouse-ear cress).